The chain runs to 289 residues: Movement protein (289 aa).

Belongs to the ilarvirus movement protein family.

The protein localises to the host cell junction. Its subcellular location is the host plasmodesma. In terms of biological role, transports viral genome to neighboring plant cells directly through plasmosdesmata, without any budding. The movement protein allows efficient cell to cell propagation, by bypassing the host cell wall barrier. Acts by forming a tubular structure at the host plasmodesmata, enlarging it enough to allow free passage of virion capsids. This Tobacco streak virus (strain WC) (TSV) protein is Movement protein.